The chain runs to 155 residues: NADH-ubiquinone oxidoreductase chain 6 (155 aa).

Transmembrane regions (helical) follow at residues 1–21, 42–62, 71–91, and 121–141; these read MLGS…PLAF, WISL…FIYV, FAVD…SFLV, and LTML…LLVI.

Belongs to the complex I subunit 6 family.

Its subcellular location is the mitochondrion membrane. The enzyme catalyses a ubiquinone + NADH + 5 H(+)(in) = a ubiquinol + NAD(+) + 4 H(+)(out). Core subunit of the mitochondrial membrane respiratory chain NADH dehydrogenase (Complex I) that is believed to belong to the minimal assembly required for catalysis. Complex I functions in the transfer of electrons from NADH to the respiratory chain. The immediate electron acceptor for the enzyme is believed to be ubiquinone. In Artemia franciscana (Brine shrimp), this protein is NADH-ubiquinone oxidoreductase chain 6 (ND6).